Reading from the N-terminus, the 508-residue chain is Photosystem II CP47 reaction center protein (508 aa).

6 helical membrane-spanning segments follow: residues 21–36 (SVHIMHTALVSGWAGS), 101–115 (IVFSGLCFLAAIWHW), 140–156 (GIHLFLSGVACFGFGAF), 203–218 (IAAGTLGILAGLFHLS), 237–252 (VLSSSIAAVFFAAFVV), and 457–472 (SFALLFFFGHIWHGAR).

This sequence belongs to the PsbB/PsbC family. PsbB subfamily. PSII is composed of 1 copy each of membrane proteins PsbA, PsbB, PsbC, PsbD, PsbE, PsbF, PsbH, PsbI, PsbJ, PsbK, PsbL, PsbM, PsbT, PsbX, PsbY, PsbZ, Psb30/Ycf12, at least 3 peripheral proteins of the oxygen-evolving complex and a large number of cofactors. It forms dimeric complexes. It depends on Binds multiple chlorophylls. PSII binds additional chlorophylls, carotenoids and specific lipids. as a cofactor.

It localises to the plastid. The protein resides in the chloroplast thylakoid membrane. Functionally, one of the components of the core complex of photosystem II (PSII). It binds chlorophyll and helps catalyze the primary light-induced photochemical processes of PSII. PSII is a light-driven water:plastoquinone oxidoreductase, using light energy to abstract electrons from H(2)O, generating O(2) and a proton gradient subsequently used for ATP formation. This chain is Photosystem II CP47 reaction center protein, found in Platanus occidentalis (Sycamore).